Reading from the N-terminus, the 219-residue chain is Tritrans,polycis-undecaprenyl-diphosphate synthase (geranylgeranyl-diphosphate specific) (219 aa).

D12 is a catalytic residue. Position 12 (D12) interacts with Mg(2+). Substrate-binding positions include G13–R16, W17, and S59–D61. The active-site Proton acceptor is the N62. Residues R66, R168, and R174 to S176 each bind substrate. Position 187 (E187) interacts with Mg(2+).

It belongs to the UPP synthase family. Homodimer. The cofactor is Mg(2+).

It carries out the reaction geranylgeranyl diphosphate + 7 isopentenyl diphosphate = tri-trans,hepta-cis-undecaprenyl diphosphate + 7 diphosphate. Functionally, catalyzes the sequential condensation of isopentenyl diphosphate (IPP) with geranylgeranyl diphosphate (GGPP) to yield (2Z,6Z,10Z,14Z,18Z,22Z,26Z,30E,34E,38E)-undecaprenyl diphosphate (tritrans,heptacis-UPP). It is probably the precursor of glycosyl carrier lipids. The chain is Tritrans,polycis-undecaprenyl-diphosphate synthase (geranylgeranyl-diphosphate specific) from Aeropyrum pernix (strain ATCC 700893 / DSM 11879 / JCM 9820 / NBRC 100138 / K1).